The following is a 428-amino-acid chain: Tryptophan synthase beta chain (428 aa).

Lysine 100 is subject to N6-(pyridoxal phosphate)lysine.

The protein belongs to the TrpB family. In terms of assembly, tetramer of two alpha and two beta chains. Pyridoxal 5'-phosphate serves as cofactor.

The catalysed reaction is (1S,2R)-1-C-(indol-3-yl)glycerol 3-phosphate + L-serine = D-glyceraldehyde 3-phosphate + L-tryptophan + H2O. Its pathway is amino-acid biosynthesis; L-tryptophan biosynthesis; L-tryptophan from chorismate: step 5/5. The beta subunit is responsible for the synthesis of L-tryptophan from indole and L-serine. The sequence is that of Tryptophan synthase beta chain from Streptomyces avermitilis (strain ATCC 31267 / DSM 46492 / JCM 5070 / NBRC 14893 / NCIMB 12804 / NRRL 8165 / MA-4680).